The sequence spans 883 residues: Sodium/sulfate cotransporter 2 (883 aa).

Transmembrane regions (helical) follow at residues 3-23 (FGWQ…VMAA), 30-50 (VTFT…VTVA), 60-80 (GLLT…TGGL), 106-126 (MCLS…PILI), 139-159 (LLIP…IGTS), and 185-205 (IFDI…FILL). RCK C-terminal domains are found at residues 211–295 (LPGN…EFGL), 317–401 (VFTP…SKNN), 406–491 (VRAV…FPGL), and 497–583 (EQVD…DKSF). 6 helical membrane-spanning segments follow: residues 600 to 620 (MVIG…GGLK), 624 to 644 (YIHL…TGCM), 657 to 677 (VYLT…TGVA), 693 to 713 (SDGA…ELLT), 774 to 794 (FAII…FILC), and 802 to 822 (VWIV…LYFL). Positions 857 to 883 (QASRTGSDGTGSSDSPRALGVPKVITA) are disordered. The segment covering 861 to 871 (TGSDGTGSSDS) has biased composition (low complexity).

This sequence belongs to the divalent anion:Na+ symporter (DASS) superfamily. Na+/sulfate symporter (TC 2.A.47.4) family.

Its subcellular location is the cell membrane. Functionally, na(+)/sulfate cotransporter with a probable high-affinity for sulfate and a proteasome dependent turnover. The protein is Sodium/sulfate cotransporter 2 (SLT2) of Chlamydomonas reinhardtii (Chlamydomonas smithii).